We begin with the raw amino-acid sequence, 506 residues long: Protein MGF 505-9R (506 aa).

ANK repeat units lie at residues 54–83, 253–283, and 313–343; these read SIHK…NLKY, QVDT…EIVE, and FVKK…KINL.

This sequence belongs to the asfivirus MGF 505 family.

Functionally, plays a role in virus cell tropism, and may be required for efficient virus replication in macrophages. This African swine fever virus (isolate Tick/Malawi/Lil 20-1/1983) (ASFV) protein is Protein MGF 505-9R.